The chain runs to 33 residues: Kappa-sparatoxin-Hv1a (33 aa).

3 disulfides stabilise this stretch: Cys2-Cys17, Cys9-Cys22, and Cys16-Cys27. Tryptophan amide is present on Trp33.

As to expression, expressed by the venom gland.

Its subcellular location is the secreted. Blocks transient outward voltage-gated potassium channels in rat ventricular myocytes (thus prolonging action-potential duration) and rat Kv4.2/KCNA4 channels expressed in Xenopus oocytes. Is also a weak blocker of calcium channels in rat cerebellar granule cells. The polypeptide is Kappa-sparatoxin-Hv1a (Heteropoda venatoria (Brown huntsman spider)).